We begin with the raw amino-acid sequence, 124 residues long: Protein YobA (124 aa).

Positions 1-26 (MASTARSLRYALAILTTSLVTPSVWA) are cleaved as a signal peptide. Cu cation contacts are provided by H27 and H113.

It belongs to the CopC family.

It localises to the periplasm. The sequence is that of Protein YobA (yobA) from Escherichia coli O6:H1 (strain CFT073 / ATCC 700928 / UPEC).